Consider the following 61-residue polypeptide: Small ribosomal subunit protein uS14 (61 aa).

Residues Cys24, Cys27, Cys40, and Cys43 each coordinate Zn(2+).

The protein belongs to the universal ribosomal protein uS14 family. Zinc-binding uS14 subfamily. As to quaternary structure, part of the 30S ribosomal subunit. Contacts proteins S3 and S10. Zn(2+) is required as a cofactor.

Binds 16S rRNA, required for the assembly of 30S particles and may also be responsible for determining the conformation of the 16S rRNA at the A site. This Oleidesulfovibrio alaskensis (strain ATCC BAA-1058 / DSM 17464 / G20) (Desulfovibrio alaskensis) protein is Small ribosomal subunit protein uS14.